The primary structure comprises 284 residues: Nucleotide-binding protein NMCC_0698 (284 aa).

8-15 contacts ATP; the sequence is GLSGSGKS. A GTP-binding site is contributed by 58 to 61; it reads DVRS.

The protein belongs to the RapZ-like family.

In terms of biological role, displays ATPase and GTPase activities. This chain is Nucleotide-binding protein NMCC_0698, found in Neisseria meningitidis serogroup C (strain 053442).